The chain runs to 93 residues: uncharacterized protein (93 aa).

This is an uncharacterized protein from Homo sapiens (Human).